Here is a 122-residue protein sequence, read N- to C-terminus: Large ribosomal subunit protein uL14 (122 aa).

This sequence belongs to the universal ribosomal protein uL14 family. In terms of assembly, part of the 50S ribosomal subunit. Forms a cluster with proteins L3 and L19. In the 70S ribosome, L14 and L19 interact and together make contacts with the 16S rRNA in bridges B5 and B8.

Functionally, binds to 23S rRNA. Forms part of two intersubunit bridges in the 70S ribosome. The chain is Large ribosomal subunit protein uL14 from Carboxydothermus hydrogenoformans (strain ATCC BAA-161 / DSM 6008 / Z-2901).